The sequence spans 277 residues: S-formylglutathione hydrolase FrmB (277 aa).

Catalysis depends on charge relay system residues serine 145, aspartate 221, and histidine 254.

It belongs to the esterase D family.

It catalyses the reaction S-formylglutathione + H2O = formate + glutathione + H(+). Its function is as follows. Serine hydrolase involved in the detoxification of formaldehyde. Hydrolyzes S-formylglutathione to glutathione and formate. This is S-formylglutathione hydrolase FrmB (frmB) from Escherichia coli (strain ATCC 8739 / DSM 1576 / NBRC 3972 / NCIMB 8545 / WDCM 00012 / Crooks).